Consider the following 265-residue polypeptide: Undecaprenyl-diphosphatase (265 aa).

8 helical membrane passes run Gly15–Tyr37, Lys41–Tyr61, Tyr85–Ile105, Leu109–Val129, Val144–Phe164, Leu183–Asp203, Phe218–Ile238, and Val244–Trp264.

The protein belongs to the UppP family.

The protein resides in the cell inner membrane. It carries out the reaction di-trans,octa-cis-undecaprenyl diphosphate + H2O = di-trans,octa-cis-undecaprenyl phosphate + phosphate + H(+). Its function is as follows. Catalyzes the dephosphorylation of undecaprenyl diphosphate (UPP). Confers resistance to bacitracin. The polypeptide is Undecaprenyl-diphosphatase (Oleidesulfovibrio alaskensis (strain ATCC BAA-1058 / DSM 17464 / G20) (Desulfovibrio alaskensis)).